The primary structure comprises 143 residues: Large ribosomal subunit protein uL11 (143 aa).

It belongs to the universal ribosomal protein uL11 family. As to quaternary structure, part of the ribosomal stalk of the 50S ribosomal subunit. Interacts with L10 and the large rRNA to form the base of the stalk. L10 forms an elongated spine to which L12 dimers bind in a sequential fashion forming a multimeric L10(L12)X complex. One or more lysine residues are methylated.

Its function is as follows. Forms part of the ribosomal stalk which helps the ribosome interact with GTP-bound translation factors. In Kocuria rhizophila (strain ATCC 9341 / DSM 348 / NBRC 103217 / DC2201), this protein is Large ribosomal subunit protein uL11.